Here is a 725-residue protein sequence, read N- to C-terminus: LPS-assembly protein LptD (725 aa).

The first 25 residues, 1 to 25, serve as a signal peptide directing secretion; sequence MSLLSKLHLILYICLLLLPLRFVNA.

Belongs to the LptD family. As to quaternary structure, component of the lipopolysaccharide transport and assembly complex. Interacts with LptE and LptA.

The protein resides in the cell outer membrane. Its function is as follows. Together with LptE, is involved in the assembly of lipopolysaccharide (LPS) at the surface of the outer membrane. This chain is LPS-assembly protein LptD, found in Nitrosomonas eutropha (strain DSM 101675 / C91 / Nm57).